The chain runs to 414 residues: Serine/threonine transporter SstT (414 aa).

Transmembrane regions (helical) follow at residues 19–39, 55–75, 89–109, 148–168, 189–209, 223–243, 297–317, 323–343, and 363–383; these read IIVGLVLGVVTALISPDLEPV, FVKGLRAVAPILIFVLVIAAI, IVMLYIIGTFGASIVAVLASF, ALATSNFIGILAWAIALGIAL, IVHLVISLAPFGIFGLVAATL, LLLVLLGSMLFMALVVNPFIV, IPLGATINMAGAAITVTVLTL, LGIPVSIPTAILLSVVSAVCA, and LFGISGDVAAQVIAVGFVIGV.

The protein belongs to the dicarboxylate/amino acid:cation symporter (DAACS) (TC 2.A.23) family.

It is found in the cell inner membrane. The enzyme catalyses L-serine(in) + Na(+)(in) = L-serine(out) + Na(+)(out). It carries out the reaction L-threonine(in) + Na(+)(in) = L-threonine(out) + Na(+)(out). In terms of biological role, involved in the import of serine and threonine into the cell, with the concomitant import of sodium (symport system). This is Serine/threonine transporter SstT from Actinobacillus succinogenes (strain ATCC 55618 / DSM 22257 / CCUG 43843 / 130Z).